The chain runs to 233 residues: Large ribosomal subunit protein uL1 (233 aa).

It belongs to the universal ribosomal protein uL1 family. Part of the 50S ribosomal subunit.

Binds directly to 23S rRNA. The L1 stalk is quite mobile in the ribosome, and is involved in E site tRNA release. In terms of biological role, protein L1 is also a translational repressor protein, it controls the translation of the L11 operon by binding to its mRNA. This is Large ribosomal subunit protein uL1 from Rhodospirillum rubrum (strain ATCC 11170 / ATH 1.1.1 / DSM 467 / LMG 4362 / NCIMB 8255 / S1).